The chain runs to 231 residues: Translin-associated protein X homolog (231 aa).

The protein belongs to the translin family.

The protein resides in the cytoplasm. Its subcellular location is the nucleus. In Schizosaccharomyces pombe (strain 972 / ATCC 24843) (Fission yeast), this protein is Translin-associated protein X homolog.